Consider the following 199-residue polypeptide: ATP-dependent Clp protease proteolytic subunit (199 aa).

Catalysis depends on serine 97, which acts as the Nucleophile. Histidine 122 is an active-site residue.

Belongs to the peptidase S14 family. Fourteen ClpP subunits assemble into 2 heptameric rings which stack back to back to give a disk-like structure with a central cavity, resembling the structure of eukaryotic proteasomes.

Its subcellular location is the cytoplasm. The enzyme catalyses Hydrolysis of proteins to small peptides in the presence of ATP and magnesium. alpha-casein is the usual test substrate. In the absence of ATP, only oligopeptides shorter than five residues are hydrolyzed (such as succinyl-Leu-Tyr-|-NHMec, and Leu-Tyr-Leu-|-Tyr-Trp, in which cleavage of the -Tyr-|-Leu- and -Tyr-|-Trp bonds also occurs).. Its function is as follows. Cleaves peptides in various proteins in a process that requires ATP hydrolysis. Has a chymotrypsin-like activity. Plays a major role in the degradation of misfolded proteins. This is ATP-dependent Clp protease proteolytic subunit from Geobacter sulfurreducens (strain ATCC 51573 / DSM 12127 / PCA).